The primary structure comprises 151 residues: Small ribosomal subunit protein bS6 (151 aa).

The segment at 94-151 is disordered; it reads EEHEQGPSAMMRKRDDDDRGERGERPRGPRPERGERGERGERGPRRPREDNIGEEGLY. Basic and acidic residues predominate over residues 105 to 144; the sequence is RKRDDDDRGERGERPRGPRPERGERGERGERGPRRPREDN.

It belongs to the bacterial ribosomal protein bS6 family.

Binds together with bS18 to 16S ribosomal RNA. The protein is Small ribosomal subunit protein bS6 of Beijerinckia indica subsp. indica (strain ATCC 9039 / DSM 1715 / NCIMB 8712).